A 109-amino-acid polypeptide reads, in one-letter code: Large ribosomal subunit protein uL24 (109 aa).

It belongs to the universal ribosomal protein uL24 family. In terms of assembly, part of the 50S ribosomal subunit.

One of two assembly initiator proteins, it binds directly to the 5'-end of the 23S rRNA, where it nucleates assembly of the 50S subunit. In terms of biological role, one of the proteins that surrounds the polypeptide exit tunnel on the outside of the subunit. The polypeptide is Large ribosomal subunit protein uL24 (Syntrophobacter fumaroxidans (strain DSM 10017 / MPOB)).